The chain runs to 290 residues: 4-hydroxybenzoate octaprenyltransferase (290 aa).

Helical transmembrane passes span 23-43 (IGTLLLLWPTLWALWLAGKGV), 46-66 (LSILVVFVVGVFLMRAAGCVV), 99-119 (LFVVLVLVSFGLVLTLNAMTI), 141-161 (LPQFVLGAAFGWGIPMAYAAV), 170-190 (WLLLLANICWTVAYDTLYAMV), 213-233 (LIVGLLQFATLLLMLWVGYLT), 234-254 (QMSGAFYWSLLLAGALFIHQQ), and 268-288 (AFMDNNYVGLVLFIGIALSYW).

It belongs to the UbiA prenyltransferase family. Requires Mg(2+) as cofactor.

It localises to the cell inner membrane. The enzyme catalyses all-trans-octaprenyl diphosphate + 4-hydroxybenzoate = 4-hydroxy-3-(all-trans-octaprenyl)benzoate + diphosphate. Its pathway is cofactor biosynthesis; ubiquinone biosynthesis. Functionally, catalyzes the prenylation of para-hydroxybenzoate (PHB) with an all-trans polyprenyl group. Mediates the second step in the final reaction sequence of ubiquinone-8 (UQ-8) biosynthesis, which is the condensation of the polyisoprenoid side chain with PHB, generating the first membrane-bound Q intermediate 3-octaprenyl-4-hydroxybenzoate. This Serratia proteamaculans (strain 568) protein is 4-hydroxybenzoate octaprenyltransferase.